Consider the following 289-residue polypeptide: Nucleotide-binding protein LAF_0356 (289 aa).

12–19 (GMSGAGKT) serves as a coordination point for ATP. Residue 62–65 (DSRS) participates in GTP binding.

Belongs to the RapZ-like family.

In terms of biological role, displays ATPase and GTPase activities. The polypeptide is Nucleotide-binding protein LAF_0356 (Limosilactobacillus fermentum (strain NBRC 3956 / LMG 18251) (Lactobacillus fermentum)).